A 545-amino-acid polypeptide reads, in one-letter code: CTP synthase (545 aa).

The interval 1 to 266 (MTHFIFVTGG…DDLICERFGY (266 aa)) is amidoligase domain. Ser-13 contributes to the CTP binding site. UTP is bound at residue Ser-13. ATP-binding positions include 14 to 19 (SLGKGI) and Asp-71. Asp-71 and Glu-140 together coordinate Mg(2+). CTP-binding positions include 147–149 (DIE), 187–192 (KTKPTQ), and Lys-223. Residues 187–192 (KTKPTQ) and Lys-223 contribute to the UTP site. Residue 239–241 (KDA) participates in ATP binding. A Glutamine amidotransferase type-1 domain is found at 292 to 543 (RVAMVGKYVE…IDAAKKQHLK (252 aa)). An L-glutamine-binding site is contributed by Gly-353. Cys-380 acts as the Nucleophile; for glutamine hydrolysis in catalysis. L-glutamine is bound by residues 381–384 (LGMQ), Glu-404, and Arg-471. Active-site residues include His-516 and Glu-518.

The protein belongs to the CTP synthase family. As to quaternary structure, homotetramer.

The enzyme catalyses UTP + L-glutamine + ATP + H2O = CTP + L-glutamate + ADP + phosphate + 2 H(+). The catalysed reaction is L-glutamine + H2O = L-glutamate + NH4(+). It catalyses the reaction UTP + NH4(+) + ATP = CTP + ADP + phosphate + 2 H(+). It participates in pyrimidine metabolism; CTP biosynthesis via de novo pathway; CTP from UDP: step 2/2. Its activity is regulated as follows. Allosterically activated by GTP, when glutamine is the substrate; GTP has no effect on the reaction when ammonia is the substrate. The allosteric effector GTP functions by stabilizing the protein conformation that binds the tetrahedral intermediate(s) formed during glutamine hydrolysis. Inhibited by the product CTP, via allosteric rather than competitive inhibition. Catalyzes the ATP-dependent amination of UTP to CTP with either L-glutamine or ammonia as the source of nitrogen. Regulates intracellular CTP levels through interactions with the four ribonucleotide triphosphates. In Acinetobacter baylyi (strain ATCC 33305 / BD413 / ADP1), this protein is CTP synthase.